The sequence spans 307 residues: D-alanine--D-alanine ligase (307 aa).

The region spanning 101 to 301 (KTVMRAAGVS…FGELVRWMVE (201 aa)) is the ATP-grasp domain. An ATP-binding site is contributed by 127–182 (PLTPPYVVKPIAEGSSMGVIIVRDERSHPPQILASDEWVYGEEVLAETYVAGRELT). Mg(2+) is bound by residues aspartate 251, glutamate 268, and asparagine 270.

This sequence belongs to the D-alanine--D-alanine ligase family. Mg(2+) serves as cofactor. Requires Mn(2+) as cofactor.

Its subcellular location is the cytoplasm. The catalysed reaction is 2 D-alanine + ATP = D-alanyl-D-alanine + ADP + phosphate + H(+). The protein operates within cell wall biogenesis; peptidoglycan biosynthesis. In terms of biological role, cell wall formation. This chain is D-alanine--D-alanine ligase, found in Methylorubrum extorquens (strain CM4 / NCIMB 13688) (Methylobacterium extorquens).